The sequence spans 753 residues: 5-methyltetrahydropteroyltriglutamate--homocysteine methyltransferase (753 aa).

5-methyltetrahydropteroyltri-L-glutamate is bound by residues 17–20 (RELK) and Lys117. Residues 431–433 (IGS) and Glu484 each bind L-homocysteine. Residues 431 to 433 (IGS) and Glu484 contribute to the L-methionine site. Residues 515-516 (RC) and Trp561 each bind 5-methyltetrahydropteroyltri-L-glutamate. Asp599 contributes to the L-homocysteine binding site. Asp599 provides a ligand contact to L-methionine. Residue Glu605 coordinates 5-methyltetrahydropteroyltri-L-glutamate. Zn(2+)-binding residues include His641, Cys643, and Glu665. The active-site Proton donor is His694. Cys726 contacts Zn(2+).

Belongs to the vitamin-B12 independent methionine synthase family. As to quaternary structure, monomer. The cofactor is Zn(2+).

It catalyses the reaction 5-methyltetrahydropteroyltri-L-glutamate + L-homocysteine = tetrahydropteroyltri-L-glutamate + L-methionine. The protein operates within amino-acid biosynthesis; L-methionine biosynthesis via de novo pathway; L-methionine from L-homocysteine (MetE route): step 1/1. In terms of biological role, catalyzes the transfer of a methyl group from 5-methyltetrahydrofolate to homocysteine resulting in methionine formation. The sequence is that of 5-methyltetrahydropteroyltriglutamate--homocysteine methyltransferase from Escherichia coli (strain K12).